The following is a 123-amino-acid chain: Small ribosomal subunit protein uS13 (123 aa).

The tract at residues 93–123 is disordered; the sequence is RRNLPVRGQKTKTNARTRKGPKRAIGGKKKK.

The protein belongs to the universal ribosomal protein uS13 family. Part of the 30S ribosomal subunit. Forms a loose heterodimer with protein S19. Forms two bridges to the 50S subunit in the 70S ribosome.

In terms of biological role, located at the top of the head of the 30S subunit, it contacts several helices of the 16S rRNA. In the 70S ribosome it contacts the 23S rRNA (bridge B1a) and protein L5 of the 50S subunit (bridge B1b), connecting the 2 subunits; these bridges are implicated in subunit movement. Contacts the tRNAs in the A and P-sites. This chain is Small ribosomal subunit protein uS13, found in Clostridium botulinum (strain Loch Maree / Type A3).